The chain runs to 289 residues: Thioredoxin-like protein 1 (289 aa).

The region spanning 2-109 (VGVKPVGSDP…EEKIKQHLEN (108 aa)) is the Thioredoxin domain. The cysteines at positions 34 and 37 are disulfide-linked. The residue at position 113 (S113) is a Phosphoserine. Residues 115-285 (EDADIPKGYM…NDFKRVVGKK (171 aa)) enclose the PITH domain.

Component of the 19S regulatory cap of the 26S proteasome. Interacts with PSMD14/RPN11. Interacts with, and reduces EEF1A1.

The protein resides in the cytoplasm. Its subcellular location is the nucleus. In terms of biological role, active thioredoxin with a redox potential of about -250 mV. This chain is Thioredoxin-like protein 1 (Txnl1), found in Mus musculus (Mouse).